The chain runs to 302 residues: MTSLNQRKDRLEFNKLQKRLRRQTGSAIVDYNMIEDGDKVMVCLSGGKDSYTMLDILLSLQQTAPIRFELVAVNMDQKQPGFPEHVLPNYLAQLGVPFHIIERDTYSIVKEVVPEGKTTCGLCSRLRRGTLYGFADEIGATKIALGHHRDDIIETLFLNMFYGGKLKAMPPKLLSDDKRNIVIRPLAYCAEEDIAEFARLKGFPIIPCNLCGSQENLQRQAVKEMLHAWERQFPGRTETIFTAIRNVQPSQLGDLELFDFVNLAIDKTATAVEDASDACAVPNWHRPAQEEVVQYVDVLDIH.

Residues 45–50 carry the PP-loop motif motif; sequence SGGKDS. The [4Fe-4S] cluster site is built by Cys120, Cys123, and Cys211.

This sequence belongs to the TtcA family. In terms of assembly, homodimer. It depends on Mg(2+) as a cofactor. [4Fe-4S] cluster serves as cofactor.

The protein localises to the cytoplasm. The enzyme catalyses cytidine(32) in tRNA + S-sulfanyl-L-cysteinyl-[cysteine desulfurase] + AH2 + ATP = 2-thiocytidine(32) in tRNA + L-cysteinyl-[cysteine desulfurase] + A + AMP + diphosphate + H(+). It participates in tRNA modification. Its function is as follows. Catalyzes the ATP-dependent 2-thiolation of cytidine in position 32 of tRNA, to form 2-thiocytidine (s(2)C32). The sulfur atoms are provided by the cysteine/cysteine desulfurase (IscS) system. The chain is tRNA-cytidine(32) 2-sulfurtransferase from Cellvibrio japonicus (strain Ueda107) (Pseudomonas fluorescens subsp. cellulosa).